Reading from the N-terminus, the 225-residue chain is UPF0758 protein Shew_3481 (225 aa).

In terms of domain architecture, MPN spans 102–224 (ILSDPDLTRD…IVSFAERGWI (123 aa)). The Zn(2+) site is built by His-173, His-175, and Asp-186. Residues 173–186 (HNHPSGGAEPSHAD) carry the JAMM motif motif.

It belongs to the UPF0758 family.

The polypeptide is UPF0758 protein Shew_3481 (Shewanella loihica (strain ATCC BAA-1088 / PV-4)).